The chain runs to 117 residues: Large ribosomal subunit protein bL20 (117 aa).

The protein belongs to the bacterial ribosomal protein bL20 family.

Binds directly to 23S ribosomal RNA and is necessary for the in vitro assembly process of the 50S ribosomal subunit. It is not involved in the protein synthesizing functions of that subunit. The polypeptide is Large ribosomal subunit protein bL20 (Campylobacter jejuni subsp. jejuni serotype O:2 (strain ATCC 700819 / NCTC 11168)).